Consider the following 337-residue polypeptide: Holliday junction branch migration complex subunit RuvB (337 aa).

Residues 1–179 (MTHQVAVLHQ…FAFSARLSYY (179 aa)) form a large ATPase domain (RuvB-L) region. Residues Leu-18, Arg-19, Gly-60, Lys-63, Thr-64, Ser-65, 126–128 (EDF), Arg-169, Tyr-179, and Arg-216 contribute to the ATP site. Residue Thr-64 participates in Mg(2+) binding. Positions 180-250 (SDQDLKEILV…VAEKALAMLL (71 aa)) are small ATPAse domain (RuvB-S). The interval 253–337 (DWGLNEIDIK…KNLLSLGEGQ (85 aa)) is head domain (RuvB-H). DNA is bound by residues Lys-308 and Arg-313.

Belongs to the RuvB family. Homohexamer. Forms an RuvA(8)-RuvB(12)-Holliday junction (HJ) complex. HJ DNA is sandwiched between 2 RuvA tetramers; dsDNA enters through RuvA and exits via RuvB. An RuvB hexamer assembles on each DNA strand where it exits the tetramer. Each RuvB hexamer is contacted by two RuvA subunits (via domain III) on 2 adjacent RuvB subunits; this complex drives branch migration. In the full resolvosome a probable DNA-RuvA(4)-RuvB(12)-RuvC(2) complex forms which resolves the HJ.

It localises to the cytoplasm. The enzyme catalyses ATP + H2O = ADP + phosphate + H(+). Functionally, the RuvA-RuvB-RuvC complex processes Holliday junction (HJ) DNA during genetic recombination and DNA repair, while the RuvA-RuvB complex plays an important role in the rescue of blocked DNA replication forks via replication fork reversal (RFR). RuvA specifically binds to HJ cruciform DNA, conferring on it an open structure. The RuvB hexamer acts as an ATP-dependent pump, pulling dsDNA into and through the RuvAB complex. RuvB forms 2 homohexamers on either side of HJ DNA bound by 1 or 2 RuvA tetramers; 4 subunits per hexamer contact DNA at a time. Coordinated motions by a converter formed by DNA-disengaged RuvB subunits stimulates ATP hydrolysis and nucleotide exchange. Immobilization of the converter enables RuvB to convert the ATP-contained energy into a lever motion, pulling 2 nucleotides of DNA out of the RuvA tetramer per ATP hydrolyzed, thus driving DNA branch migration. The RuvB motors rotate together with the DNA substrate, which together with the progressing nucleotide cycle form the mechanistic basis for DNA recombination by continuous HJ branch migration. Branch migration allows RuvC to scan DNA until it finds its consensus sequence, where it cleaves and resolves cruciform DNA. This chain is Holliday junction branch migration complex subunit RuvB, found in Chlamydia pneumoniae (Chlamydophila pneumoniae).